A 278-amino-acid polypeptide reads, in one-letter code: Extracellular metalloprotease GLRG_06511 (278 aa).

Positions 1 to 19 (MQFKSLLVSALAAASTALA) are cleaved as a signal peptide. Asparagine 51 carries N-linked (GlcNAc...) asparagine glycosylation. Histidine 190 serves as a coordination point for Zn(2+). The active site involves glutamate 191. A Zn(2+)-binding site is contributed by histidine 194. Cysteine 227 and cysteine 254 are joined by a disulfide.

The protein belongs to the peptidase M43B family.

It is found in the secreted. Secreted metalloproteinase that allows assimilation of proteinaceous substrates. This chain is Extracellular metalloprotease GLRG_06511, found in Colletotrichum graminicola (strain M1.001 / M2 / FGSC 10212) (Maize anthracnose fungus).